The primary structure comprises 362 residues: Caspase activity and apoptosis inhibitor 1 (362 aa).

Basic residues predominate over residues 1-14 (MTGKKSSREKRRKR). 2 disordered regions span residues 1–44 (MTGK…SGCG) and 65–101 (TGGGSGGSCWGGSSVERGERRKRRSTDSSSSVSGSLQ). Residues 19 to 32 (AAAALAAPDLVPAV) show a composition bias toward low complexity. 2 stretches are compositionally biased toward gly residues: residues 33-44 (GGSGSGSTSGCG) and 65-74 (TGGGSGGSCW). Serine 89 is modified (phosphoserine). Position 90 is a phosphothreonine (threonine 90). A Glycyl lysine isopeptide (Lys-Gly) (interchain with G-Cter in SUMO2) cross-link involves residue lysine 105. Phosphoserine is present on residues serine 121 and serine 204. Disordered regions lie at residues 226–251 (SCVDSTSSLRENKQPEGLELKQGKGE), 269–291 (GPCNEEAAAPEVPENTVQSEAGQ), and 309–332 (LAESSPKEPKAATLTVPPPEDVQP). The span at 235 to 251 (RENKQPEGLELKQGKGE) shows a compositional bias: basic and acidic residues. Over residues 273 to 282 (EEAAAPEVPE) the composition is skewed to low complexity. A coiled-coil region spans residues 282 to 312 (ENTVQSEAGQIDDLEKDIEKSVNEILGLAES). A Phosphoserine modification is found at serine 313.

Its function is as follows. Anti-apoptotic protein that modulates a caspase-10 dependent mitochondrial caspase-3/9 feedback amplification loop. The protein is Caspase activity and apoptosis inhibitor 1 (CAAP1) of Bos taurus (Bovine).